The primary structure comprises 114 residues: MIKALFNKNTALAAVAILALSGGAMAESAKTHKTDMAKKKVSELTCEDFNGLEESFKPTVVGWVVGFNKKGKEEDAVIDVDGIETVTPAIIEACKQEPKASFWKKAEAELKKVF.

A signal peptide spans 1–26 (MIKALFNKNTALAAVAILALSGGAMA). C46 and C94 are oxidised to a cystine.

The protein belongs to the HdeA family.

The protein localises to the periplasm. Its function is as follows. Required for optimal acid stress protection. Exhibits a chaperone-like activity only at low pH by suppressing non-specifically the aggregation of denaturated periplasmic proteins. Contributes to acid resistance. Not required for wild-type virulence in the BALB/c mouse model. The sequence is that of Probable acid stress chaperone HdeA from Brucella abortus (strain 2308).